We begin with the raw amino-acid sequence, 160 residues long: SsrA-binding protein (160 aa).

This sequence belongs to the SmpB family.

The protein localises to the cytoplasm. Required for rescue of stalled ribosomes mediated by trans-translation. Binds to transfer-messenger RNA (tmRNA), required for stable association of tmRNA with ribosomes. tmRNA and SmpB together mimic tRNA shape, replacing the anticodon stem-loop with SmpB. tmRNA is encoded by the ssrA gene; the 2 termini fold to resemble tRNA(Ala) and it encodes a 'tag peptide', a short internal open reading frame. During trans-translation Ala-aminoacylated tmRNA acts like a tRNA, entering the A-site of stalled ribosomes, displacing the stalled mRNA. The ribosome then switches to translate the ORF on the tmRNA; the nascent peptide is terminated with the 'tag peptide' encoded by the tmRNA and targeted for degradation. The ribosome is freed to recommence translation, which seems to be the essential function of trans-translation. The chain is SsrA-binding protein from Escherichia coli O6:K15:H31 (strain 536 / UPEC).